The primary structure comprises 306 residues: N-acetylmuramic acid 6-phosphate etherase (306 aa).

The SIS domain occupies 59 to 222; it reads TSQALAKGGR…STGTMVMLGK (164 aa). Glu-87 serves as the catalytic Proton donor. Glu-118 is an active-site residue.

This sequence belongs to the GCKR-like family. MurNAc-6-P etherase subfamily. As to quaternary structure, homodimer.

The enzyme catalyses N-acetyl-D-muramate 6-phosphate + H2O = N-acetyl-D-glucosamine 6-phosphate + (R)-lactate. The protein operates within amino-sugar metabolism; N-acetylmuramate degradation. Specifically catalyzes the cleavage of the D-lactyl ether substituent of MurNAc 6-phosphate, producing GlcNAc 6-phosphate and D-lactate. This Microcystis aeruginosa (strain NIES-843 / IAM M-2473) protein is N-acetylmuramic acid 6-phosphate etherase.